Consider the following 419-residue polypeptide: Peroxisome biogenesis factor 10 (419 aa).

Over 1-27 the chain is Peroxisomal matrix; it reads MPPSEEIKLRAVSPRPDFKANYLEFAN. A helical transmembrane segment spans residues 28-57; sequence APAIVRANQKDSYFETVLRDKLQNVIQIFK. A topological domain (cytoplasmic) is located at residue Gly58. The helical transmembrane segment at 59–80 threads the bilayer; the sequence is QRFTHTHPEEIGVAAKALYLSL. Residues 81–108 are Peroxisomal matrix-facing; that stretch reads TTLLGTKTLGEEYVDLIYVSRDGKRIPR. A helical membrane pass occupies residues 109 to 141; it reads YLARAGFIFAYAILPYFLTRLFRRLKSSSTPKD. The Cytoplasmic segment spans residues 142 to 158; the sequence is EVTEEKINKELPISLRI. The chain crosses the membrane as a helical span at residues 159–185; it reads EKYLSNMSYSKVLDTIMNLHIAVFYFS. At 186–215 the chain is on the peroxisomal matrix side; it reads GQFYNISKRFFSMRYAFGHKINKERTPNGN. A helical transmembrane segment spans residues 216–235; that stretch reads YELLGGLIVLQLVMKSLGGF. The Cytoplasmic segment spans residues 236–419; that stretch reads KGLIGSFTGN…RTLGYFLVVF (184 aa). Zn(2+) contacts are provided by Cys298, Cys301, Cys313, His315, Cys318, Cys321, Cys334, and Cys347. The RING-type zinc-finger motif lies at 298-360; it reads CMLCLSYMTN…FYIPTLNKIC (63 aa).

It belongs to the pex2/pex10/pex12 family. Component of the peroxisomal translocation complex, composed of at least PEX3, PEX2, PEX10 and PEX12. Interacts with PEX19.

Its subcellular location is the peroxisome membrane. It carries out the reaction S-ubiquitinyl-[E2 ubiquitin-conjugating enzyme]-L-cysteine + [acceptor protein]-L-lysine = [E2 ubiquitin-conjugating enzyme]-L-cysteine + N(6)-ubiquitinyl-[acceptor protein]-L-lysine.. Its pathway is protein modification; protein ubiquitination. The E3 ubiquitin-protein ligase activity is stimulated by PEX12. In terms of biological role, E3 ubiquitin-protein ligase component of the peroxisomal translocation complex. The two types of peroxisomal matrix targeting signals, PTS1 and PTS2, are first recognized in the cytosol by their receptors PEX5 and PEX7, respectively, which then carry the cargo to the peroxisomal membrane. The peroxisomal targeting signal (PTS) receptor-cargo complexes interact with peroxisomal membrane protein (PMP) components of the docking complex. They have then additional downstream interactions with the translocation complex, leading to the transport of fully folded and oligomerized cargo into the peroxisome matrix. The peroxisomal translocation complex forms the retrotranslocation channel with each subunit contributing transmembrane segments that coassemble into an open channel that specifically allows the passage of PEX5 and PEX20 through the peroxisomal membrane. Specifically catalyzes monoubiquitination of PEX5 and/or PEX20 at 'Cys-6' and 'Cys-8', respectively, a modification that acts as a signal for PEX5 or PEX20 export from peroxisomes to the cytosol, thereby promoting PEX5 and PEX20 recycling. The chain is Peroxisome biogenesis factor 10 from Komagataella pastoris (Yeast).